Here is a 182-residue protein sequence, read N- to C-terminus: Peptidoglycan-recognition protein SB2 (182 aa).

A signal peptide spans 1–17; that stretch reads MKLQLALVLCGLTLALG. Positions 40-165 constitute an N-acetylmuramoyl-L-alanine amidase domain; sequence PVRLIIIHHT…CQTKATACPG (126 aa). Zn(2+) is bound at residue His-47. Cys-54 and Cys-60 form a disulfide bridge. The N-linked (GlcNAc...) asparagine glycan is linked to Asn-149. Residues His-155 and Cys-163 each coordinate Zn(2+).

The protein belongs to the N-acetylmuramoyl-L-alanine amidase 2 family. Requires Zn(2+) as cofactor.

It is found in the secreted. The catalysed reaction is Hydrolyzes the link between N-acetylmuramoyl residues and L-amino acid residues in certain cell-wall glycopeptides.. Its function is as follows. N-acetylmuramyl-L-alanine amidase involved in innate immunity by degrading bacterial peptidoglycans (PGN). Probably plays a scavenger role by digesting biologically active PGN into biologically inactive fragments. Has no direct bacteriolytic activity. This is Peptidoglycan-recognition protein SB2 (PGRP-SB2) from Drosophila melanogaster (Fruit fly).